We begin with the raw amino-acid sequence, 31 residues long: Photosystem II reaction center protein T (31 aa).

The chain crosses the membrane as a helical span at residues 3 to 23; sequence SVAYILVLTMALSVIFFAIAF.

The protein belongs to the PsbT family. In terms of assembly, PSII is composed of 1 copy each of membrane proteins PsbA, PsbB, PsbC, PsbD, PsbE, PsbF, PsbH, PsbI, PsbJ, PsbK, PsbL, PsbM, PsbT, PsbX, PsbY, PsbZ, Psb30/Ycf12, peripheral proteins PsbO, CyanoQ (PsbQ), PsbU, PsbV and a large number of cofactors. It forms dimeric complexes.

The protein resides in the cellular thylakoid membrane. Its function is as follows. Found at the monomer-monomer interface of the photosystem II (PS II) dimer, plays a role in assembly and dimerization of PSII. PSII is a light-driven water plastoquinone oxidoreductase, using light energy to abstract electrons from H(2)O, generating a proton gradient subsequently used for ATP formation. In Microcystis aeruginosa (strain NIES-843 / IAM M-2473), this protein is Photosystem II reaction center protein T.